A 397-amino-acid polypeptide reads, in one-letter code: Elongation factor Tu (397 aa).

Residues Lys10–Val207 enclose the tr-type G domain. The segment at Gly19–Thr26 is G1. Gly19–Thr26 serves as a coordination point for GTP. Residue Thr26 coordinates Mg(2+). The G2 stretch occupies residues Gly63 to Asn67. The interval Asp84 to Gly87 is G3. GTP is bound by residues Asp84 to His88 and Asn139 to Asp142. Positions Asn139–Asp142 are G4. Positions Ser177 to Leu179 are G5.

The protein belongs to the TRAFAC class translation factor GTPase superfamily. Classic translation factor GTPase family. EF-Tu/EF-1A subfamily. As to quaternary structure, monomer.

The protein resides in the cytoplasm. The catalysed reaction is GTP + H2O = GDP + phosphate + H(+). In terms of biological role, GTP hydrolase that promotes the GTP-dependent binding of aminoacyl-tRNA to the A-site of ribosomes during protein biosynthesis. In Clavibacter sepedonicus (Clavibacter michiganensis subsp. sepedonicus), this protein is Elongation factor Tu.